The sequence spans 502 residues: Glutamate--tRNA ligase (502 aa).

The 'HIGH' region signature appears at 9–19 (PSPTGFPHVGT). Residues 250-254 (KLSKR) carry the 'KMSKS' region motif. Lys253 contributes to the ATP binding site.

Belongs to the class-I aminoacyl-tRNA synthetase family. Glutamate--tRNA ligase type 1 subfamily. In terms of assembly, monomer.

It is found in the cytoplasm. The catalysed reaction is tRNA(Glu) + L-glutamate + ATP = L-glutamyl-tRNA(Glu) + AMP + diphosphate. Its function is as follows. Catalyzes the attachment of glutamate to tRNA(Glu) in a two-step reaction: glutamate is first activated by ATP to form Glu-AMP and then transferred to the acceptor end of tRNA(Glu). This chain is Glutamate--tRNA ligase, found in Acinetobacter baumannii (strain SDF).